The primary structure comprises 299 residues: ATP phosphoribosyltransferase (299 aa).

Belongs to the ATP phosphoribosyltransferase family. Long subfamily. The cofactor is Mg(2+).

It is found in the cytoplasm. The enzyme catalyses 1-(5-phospho-beta-D-ribosyl)-ATP + diphosphate = 5-phospho-alpha-D-ribose 1-diphosphate + ATP. It functions in the pathway amino-acid biosynthesis; L-histidine biosynthesis; L-histidine from 5-phospho-alpha-D-ribose 1-diphosphate: step 1/9. With respect to regulation, feedback inhibited by histidine. Catalyzes the condensation of ATP and 5-phosphoribose 1-diphosphate to form N'-(5'-phosphoribosyl)-ATP (PR-ATP). Has a crucial role in the pathway because the rate of histidine biosynthesis seems to be controlled primarily by regulation of HisG enzymatic activity. In Shewanella sp. (strain ANA-3), this protein is ATP phosphoribosyltransferase.